The chain runs to 548 residues: Probable 2,3-bisphosphoglycerate-independent phosphoglycerate mutase (548 aa).

Mn(2+) is bound by residues Asp20 and Ser73. The active-site Phosphoserine intermediate is the Ser73. Residues His134, 164–165, Arg200, Arg207, 279–282, and Lys354 each bind substrate; these read RD and RGDR. Asp422, His426, Asp463, His464, and His493 together coordinate Mn(2+).

This sequence belongs to the BPG-independent phosphoglycerate mutase family. In terms of assembly, monomer. Mn(2+) is required as a cofactor.

The enzyme catalyses (2R)-2-phosphoglycerate = (2R)-3-phosphoglycerate. It participates in carbohydrate degradation; glycolysis; pyruvate from D-glyceraldehyde 3-phosphate: step 3/5. In terms of biological role, catalyzes the interconversion of 2-phosphoglycerate and 3-phosphoglycerate. The chain is Probable 2,3-bisphosphoglycerate-independent phosphoglycerate mutase (gpmI) from Leptospira interrogans serogroup Icterohaemorrhagiae serovar copenhageni (strain Fiocruz L1-130).